The sequence spans 74 residues: Omega-conotoxin-like protein 1 (74 aa).

The first 20 residues, Met-1–Ala-20, serve as a signal peptide directing secretion. 3 disulfide bridges follow: Cys-24–Cys-38, Cys-31–Cys-43, and Cys-37–Cys-50.

Highly expressed in brain. Is also found in hemolymph.

The impact of this protein on the neuronal activity of the honeybee brain is not known. It does not affect apparent movement or hatching of blowfly larvae. However, when injected into fish, it induces a strong reversible paralytic effect. In addition, the presence of this small peptide in the hemolymph of adult drones together with its induction after bacterial infection suggests that this peptide exhibits antibacterial activity. This peptide may act by inhibiting ion channels. The chain is Omega-conotoxin-like protein 1 from Apis mellifera (Honeybee).